A 217-amino-acid polypeptide reads, in one-letter code: Probable transaldolase (217 aa).

The active-site Schiff-base intermediate with substrate is lysine 83.

This sequence belongs to the transaldolase family. Type 3B subfamily.

It localises to the cytoplasm. It catalyses the reaction D-sedoheptulose 7-phosphate + D-glyceraldehyde 3-phosphate = D-erythrose 4-phosphate + beta-D-fructose 6-phosphate. The protein operates within carbohydrate degradation; pentose phosphate pathway; D-glyceraldehyde 3-phosphate and beta-D-fructose 6-phosphate from D-ribose 5-phosphate and D-xylulose 5-phosphate (non-oxidative stage): step 2/3. Transaldolase is important for the balance of metabolites in the pentose-phosphate pathway. The chain is Probable transaldolase from Pseudothermotoga lettingae (strain ATCC BAA-301 / DSM 14385 / NBRC 107922 / TMO) (Thermotoga lettingae).